The sequence spans 327 residues: Autoinducer 2 import system permease protein LsrD (327 aa).

Transmembrane regions (helical) follow at residues 3 to 23, 41 to 61, 63 to 83, 86 to 106, 114 to 134, 158 to 178, 211 to 231, 257 to 277, and 283 to 303; these read LNWE…FGAI, ICIG…GIDI, LGST…FGLP, LAVP…AALI, LVIT…LSGL, VLGL…FWLI, ALYG…VSYF, IYGG…VGYL, and MVGI…VVVV.

It belongs to the binding-protein-dependent transport system permease family. AraH/RbsC subfamily. In terms of assembly, the complex is composed of two ATP-binding proteins (LsrA), two transmembrane proteins (LsrC and LsrD) and a solute-binding protein (LsrB).

Its subcellular location is the cell inner membrane. In terms of biological role, part of the ABC transporter complex LsrABCD involved in autoinducer 2 (AI-2) import. Probably responsible for the translocation of the substrate across the membrane. The sequence is that of Autoinducer 2 import system permease protein LsrD (lsrD) from Enterobacter sp. (strain 638).